The sequence spans 181 residues: Probable pyruvoyl-dependent arginine decarboxylase (181 aa).

Serine 43 carries the pyruvic acid (Ser) modification.

This sequence belongs to the PdaD family. Requires pyruvate as cofactor.

The catalysed reaction is L-arginine + H(+) = agmatine + CO2. This chain is Probable pyruvoyl-dependent arginine decarboxylase, found in Chlorobium luteolum (strain DSM 273 / BCRC 81028 / 2530) (Pelodictyon luteolum).